A 146-amino-acid polypeptide reads, in one-letter code: Putative pre-16S rRNA nuclease (146 aa).

It belongs to the YqgF nuclease family.

Its subcellular location is the cytoplasm. In terms of biological role, could be a nuclease involved in processing of the 5'-end of pre-16S rRNA. The sequence is that of Putative pre-16S rRNA nuclease from Burkholderia mallei (strain SAVP1).